A 753-amino-acid polypeptide reads, in one-letter code: 5-methyltetrahydropteroyltriglutamate--homocysteine methyltransferase (753 aa).

Residues 17–20 and Lys117 each bind 5-methyltetrahydropteroyltri-L-glutamate; that span reads RELK. L-homocysteine contacts are provided by residues 431–433 and Glu484; that span reads IGS. L-methionine-binding positions include 431-433 and Glu484; that span reads IGS. 5-methyltetrahydropteroyltri-L-glutamate-binding positions include 515-516 and Trp561; that span reads RC. Asp599 provides a ligand contact to L-homocysteine. Asp599 serves as a coordination point for L-methionine. A 5-methyltetrahydropteroyltri-L-glutamate-binding site is contributed by Glu605. Zn(2+)-binding residues include His641, Cys643, and Glu665. His694 acts as the Proton donor in catalysis. Zn(2+) is bound at residue Cys726.

The protein belongs to the vitamin-B12 independent methionine synthase family. Zn(2+) serves as cofactor.

The enzyme catalyses 5-methyltetrahydropteroyltri-L-glutamate + L-homocysteine = tetrahydropteroyltri-L-glutamate + L-methionine. The protein operates within amino-acid biosynthesis; L-methionine biosynthesis via de novo pathway; L-methionine from L-homocysteine (MetE route): step 1/1. Its function is as follows. Catalyzes the transfer of a methyl group from 5-methyltetrahydrofolate to homocysteine resulting in methionine formation. This Escherichia coli O8 (strain IAI1) protein is 5-methyltetrahydropteroyltriglutamate--homocysteine methyltransferase.